The sequence spans 402 residues: Protein PMR5 (402 aa).

A helical; Signal-anchor for type II membrane protein transmembrane segment spans residues Leu7–Gln23. Residues Gly40 to Gln60 are disordered. The segment covering Ser41–Ser56 has biased composition (low complexity). Positions Gly140–Ser142 match the GDS motif motif. The short motif at Asp379–Asn393 is the DCXHWCLPGXXDXWN motif element.

It belongs to the PC-esterase family. TBL subfamily. As to expression, expressed in flowers, siliques, stems and leaves.

It is found in the membrane. Functionally, required for nonhost resistance (NHR) during plant-microbe interactions. Plants mutated in PMR5 are resistant to powdery mildew species. May act as a bridging protein that binds pectin and other cell wall polysaccharides. Probably involved in maintaining esterification of pectins. May be involved in the specific O-acetylation of cell wall polymers. The protein is Protein PMR5 (PMR5) of Arabidopsis thaliana (Mouse-ear cress).